The following is a 181-amino-acid chain: ADP-ribosylation factor 2 (181 aa).

Glycine 2 carries N-myristoyl glycine lipidation. Residues 24–31, 67–71, and 126–129 each bind GTP; these read GLDAAGKT, DVGGQ, and NKQD.

The protein belongs to the small GTPase superfamily. Arf family.

The protein localises to the golgi apparatus. GTP-binding protein that functions as an allosteric activator of the cholera toxin catalytic subunit, an ADP-ribosyltransferase. Involved in protein trafficking; may modulate vesicle budding and uncoating within the Golgi apparatus. The chain is ADP-ribosylation factor 2 (ARF2) from Bos taurus (Bovine).